A 288-amino-acid chain; its full sequence is Large ribosomal subunit protein uL2 (288 aa).

Disordered stretches follow at residues 1-46 (MAIH…RNVY) and 226-288 (MVMN…RGKK). Gly residues predominate over residues 235 to 248 (NGGGQGKSKGGGGR). The segment covering 279 to 288 (HNGRKPRGKK) has biased composition (basic residues).

It belongs to the universal ribosomal protein uL2 family. In terms of assembly, part of the 50S ribosomal subunit. Forms a bridge to the 30S subunit in the 70S ribosome.

Its function is as follows. One of the primary rRNA binding proteins. Required for association of the 30S and 50S subunits to form the 70S ribosome, for tRNA binding and peptide bond formation. It has been suggested to have peptidyltransferase activity; this is somewhat controversial. Makes several contacts with the 16S rRNA in the 70S ribosome. The sequence is that of Large ribosomal subunit protein uL2 from Opitutus terrae (strain DSM 11246 / JCM 15787 / PB90-1).